A 621-amino-acid chain; its full sequence is Chaperone protein HtpG (621 aa).

The interval 1–325 (MTDASVKETF…SQDLSLNVSR (325 aa)) is a; substrate-binding. The interval 326 to 541 (EMLQSDPKLA…EGDIDVNLER (216 aa)) is b. Residues 542-621 (MLKRHGQLQD…RLGSVMDSAL (80 aa)) form a c region.

It belongs to the heat shock protein 90 family. Homodimer.

The protein localises to the cytoplasm. In terms of biological role, molecular chaperone. Has ATPase activity. In Roseobacter denitrificans (strain ATCC 33942 / OCh 114) (Erythrobacter sp. (strain OCh 114)), this protein is Chaperone protein HtpG.